The primary structure comprises 218 residues: MSLGLIGRKVGMTRLFTDEGDSIPVTVIDVSDNRIAQIKTQATDGYDAIQLAHGTRRATRVTKAMAGHFAKAGVMAGNGLNEFQLDAAKIAEMTPGQVIPADTAFTAGQKVDVQGVSIGKGYAGTIKRYHFASGRASHGNSRSHNVPGSIGMAQDPGRVFPGKRMTGHLGDVTRTVQNLVIARIDAERNLIMVKGAIPGAPGGKVIVTPAVKTPLKKK.

Residue Q154 is modified to N5-methylglutamine.

Belongs to the universal ribosomal protein uL3 family. In terms of assembly, part of the 50S ribosomal subunit. Forms a cluster with proteins L14 and L19. In terms of processing, methylated by PrmB.

Its function is as follows. One of the primary rRNA binding proteins, it binds directly near the 3'-end of the 23S rRNA, where it nucleates assembly of the 50S subunit. The polypeptide is Large ribosomal subunit protein uL3 (Polynucleobacter asymbioticus (strain DSM 18221 / CIP 109841 / QLW-P1DMWA-1) (Polynucleobacter necessarius subsp. asymbioticus)).